A 248-amino-acid polypeptide reads, in one-letter code: uncharacterized protein (248 aa).

S141 contributes to the substrate binding site. Catalysis depends on Y154, which acts as the Proton acceptor.

Belongs to the short-chain dehydrogenases/reductases (SDR) family.

This is an uncharacterized protein from Methylorubrum extorquens (strain ATCC 14718 / DSM 1338 / JCM 2805 / NCIMB 9133 / AM1) (Methylobacterium extorquens).